The sequence spans 314 residues: Homoserine kinase (314 aa).

96–106 (PIGSGLGSSAC) is an ATP binding site.

The protein belongs to the GHMP kinase family. Homoserine kinase subfamily.

It is found in the cytoplasm. It carries out the reaction L-homoserine + ATP = O-phospho-L-homoserine + ADP + H(+). It participates in amino-acid biosynthesis; L-threonine biosynthesis; L-threonine from L-aspartate: step 4/5. In terms of biological role, catalyzes the ATP-dependent phosphorylation of L-homoserine to L-homoserine phosphate. The polypeptide is Homoserine kinase (Haemophilus influenzae (strain 86-028NP)).